The chain runs to 413 residues: Aspartate aminotransferase, cytoplasmic (413 aa).

Positions 39, 141, and 195 each coordinate L-aspartate. Residue lysine 259 is modified to N6-(pyridoxal phosphate)lysine. Arginine 387 is an L-aspartate binding site.

The protein belongs to the class-I pyridoxal-phosphate-dependent aminotransferase family. As to quaternary structure, homodimer. Pyridoxal 5'-phosphate is required as a cofactor.

It is found in the cytoplasm. The catalysed reaction is L-aspartate + 2-oxoglutarate = oxaloacetate + L-glutamate. It catalyses the reaction L-cysteine + 2-oxoglutarate = 2-oxo-3-sulfanylpropanoate + L-glutamate. It carries out the reaction (2S)-2-aminobutanoate + 2-oxoglutarate = 2-oxobutanoate + L-glutamate. The enzyme catalyses 3-sulfino-L-alanine + 2-oxoglutarate = 3-sulfinopyruvate + L-glutamate. In terms of biological role, biosynthesis of L-glutamate from L-aspartate or L-cysteine. Important regulator of levels of glutamate, the major excitatory neurotransmitter of the vertebrate central nervous system. Acts as a scavenger of glutamate in brain neuroprotection. The aspartate aminotransferase activity is involved in hepatic glucose synthesis during development and in adipocyte glyceroneogenesis. Using L-cysteine as substrate, regulates levels of mercaptopyruvate, an important source of hydrogen sulfide. Mercaptopyruvate is converted into H(2)S via the action of 3-mercaptopyruvate sulfurtransferase (3MST). Hydrogen sulfide is an important synaptic modulator and neuroprotectant in the brain. The protein is Aspartate aminotransferase, cytoplasmic of Sus scrofa (Pig).